We begin with the raw amino-acid sequence, 339 residues long: Cathepsin L (339 aa).

Positions 1-17 are cleaved as a signal peptide; sequence MRTVLVALLALVALTQA. Positions 18-121 are cleaved as a propeptide — activation peptide; the sequence is ISPLDLIKEE…ATYIPPAHVT (104 aa). Asn96 is a glycosylation site (N-linked (GlcNAc...) asparagine). 3 cysteine pairs are disulfide-bonded: Cys143/Cys186, Cys177/Cys219, and Cys278/Cys328. Cys146 is a catalytic residue. His285 is an active-site residue. The propeptide occupies 295–298; sequence DESG. Asn306 is an active-site residue.

This sequence belongs to the peptidase C1 family. In terms of assembly, dimer of a heavy and a light chain linked by disulfide bonds.

The protein resides in the lysosome. The catalysed reaction is Specificity close to that of papain. As compared to cathepsin B, cathepsin L exhibits higher activity toward protein substrates, but has little activity on Z-Arg-Arg-NHMec, and no peptidyl-dipeptidase activity.. Functionally, important for the overall degradation of proteins in lysosomes. Required for differentiation of imaginal disks. The polypeptide is Cathepsin L (Sarcophaga peregrina (Flesh fly)).